Here is a 232-residue protein sequence, read N- to C-terminus: tRNA1(Val) (adenine(37)-N6)-methyltransferase (232 aa).

Belongs to the methyltransferase superfamily. tRNA (adenine-N(6)-)-methyltransferase family.

Its subcellular location is the cytoplasm. It carries out the reaction adenosine(37) in tRNA1(Val) + S-adenosyl-L-methionine = N(6)-methyladenosine(37) in tRNA1(Val) + S-adenosyl-L-homocysteine + H(+). Its function is as follows. Specifically methylates the adenine in position 37 of tRNA(1)(Val) (anticodon cmo5UAC). This is tRNA1(Val) (adenine(37)-N6)-methyltransferase from Haemophilus influenzae (strain PittEE).